A 562-amino-acid chain; its full sequence is Phosphoglucomutase-1 (562 aa).

Residue Met-1 is modified to N-acetylmethionine. N6-acetyllysine is present on Lys-16. Arg-23 serves as a coordination point for alpha-D-glucose 1,6-bisphosphate. Thr-115 is subject to Phosphothreonine. Ser-117 is a binding site for alpha-D-glucose 1,6-bisphosphate. The active-site Phosphoserine intermediate is Ser-117. A Mg(2+)-binding site is contributed by Ser-117. Phosphoserine occurs at positions 117 and 134. Position 185 is a phosphothreonine (Thr-185). A Phosphoserine modification is found at Ser-213. Mg(2+) contacts are provided by Asp-288, Asp-290, and Asp-292. 2 residues coordinate alpha-D-glucose 1,6-bisphosphate: Asp-292 and Arg-293. N6-acetyllysine is present on Lys-349. Tyr-353 carries the phosphotyrosine modification. Thr-357 contributes to the alpha-D-glucose 1,6-bisphosphate binding site. Ser-369 is modified (phosphoserine). Glu-376, Ser-378, and Lys-389 together coordinate alpha-D-glucose 1,6-bisphosphate. Ser-378 carries the phosphoserine modification. Lys-419 is subject to N6-succinyllysine. The residue at position 467 (Thr-467) is a Phosphothreonine; by PAK1. A phosphoserine mark is found at Ser-485 and Ser-505. Thr-507 bears the Phosphothreonine mark. 2 positions are modified to phosphoserine: Ser-509 and Ser-541.

This sequence belongs to the phosphohexose mutase family. In terms of assembly, monomer. Mg(2+) serves as cofactor. Post-translationally, isoform 2 is the major calmodulin-dependent phosphoprotein in junctional skeletal sarcoplasmic reticulum vesicles. Phosphorylation at Thr-467 by PAK1 significantly enhances enzymatic activity.

It is found in the cytoplasm. It localises to the sarcoplasmic reticulum. The catalysed reaction is alpha-D-glucose 1-phosphate = alpha-D-glucose 6-phosphate. It carries out the reaction O-phospho-L-seryl-[protein] + alpha-D-glucose 1-phosphate = alpha-D-glucose 1,6-bisphosphate + L-seryl-[protein]. The enzyme catalyses alpha-D-glucose 1,6-bisphosphate + L-seryl-[protein] = O-phospho-L-seryl-[protein] + alpha-D-glucose 6-phosphate. With respect to regulation, glucose-1,6-bisphosphate enhances phosphorylation of the active site Ser-117, and thereby increases enzyme activity. Functionally, catalyzes the reversible isomerization of alpha-D-glucose 1-phosphate to alpha-D-glucose 6-phosphate. The mechanism proceeds via the intermediate compound alpha-D-glucose 1,6-bisphosphate. This enzyme participates in both the breakdown and synthesis of glucose. In Oryctolagus cuniculus (Rabbit), this protein is Phosphoglucomutase-1 (PGM1).